A 146-amino-acid polypeptide reads, in one-letter code: MNPAHLLILAAVCVSPLGASSNRPMPLNLYQFKNMVQCTVPNRSWWDFADYGCYCGRGGSGTPVDDLDRCCQVHDNCYGEAEKISRCWPYFKTYSYECSQGTLTCKGGNNACAAAVCDCDRLAAICFAGAPYNDNNYNIDLKARCQ.

A signal peptide spans 1–21; it reads MNPAHLLILAAVCVSPLGASS. Positions 22–27 are excised as a propeptide; the sequence is NRPMPL. Intrachain disulfides connect C38–C98, C53–C145, C55–C71, C70–C126, C77–C119, C87–C112, and C105–C117. Ca(2+)-binding residues include Y54, G56, and G58. H74 is a catalytic residue. D75 contributes to the Ca(2+) binding site. D120 is a catalytic residue.

Belongs to the phospholipase A2 family. Group I subfamily. D49 sub-subfamily. Ca(2+) is required as a cofactor. In terms of tissue distribution, expressed by the venom gland.

It localises to the secreted. The catalysed reaction is a 1,2-diacyl-sn-glycero-3-phosphocholine + H2O = a 1-acyl-sn-glycero-3-phosphocholine + a fatty acid + H(+). PLA2 catalyzes the calcium-dependent hydrolysis of the 2-acyl groups in 3-sn-phosphoglycerides. This Naja sputatrix (Malayan spitting cobra) protein is Acidic phospholipase A2 C.